We begin with the raw amino-acid sequence, 139 residues long: GYLGGYAAPALAYGAAAVAPAAITSQQSNILRSYGNLGQVSTYSKTVDTPYSSVSKADIRVTNNAVYAAPAAYAAAPVAYAAPALGYARTALAAPALGYARAAYAAPAVAAGGLLGVAYSAAPAVAHLTYSGLHAAYAY.

6 repeat units span residues 7–10 (AAPA), 68–71 (AAPA), 75–78 (AAPV), 93–95 (AAP), 105–108 (AAPA), and 121–124 (AAPA).

In terms of biological role, component of the cuticle of migratory locust which contains more than 100 different structural proteins. This Locusta migratoria (Migratory locust) protein is Cuticle protein 76.